The chain runs to 365 residues: Chorismate synthase (365 aa).

An NADP(+)-binding site is contributed by R47. Residues 124 to 126, G287, 302 to 306, and R328 contribute to the FMN site; these read RAS and KPTAT. The tract at residues 266 to 290 is disordered; it reads FIKSDDSSKLRTTSNNSGGIQGGIS.

It belongs to the chorismate synthase family. As to quaternary structure, homotetramer. FMNH2 is required as a cofactor.

The enzyme catalyses 5-O-(1-carboxyvinyl)-3-phosphoshikimate = chorismate + phosphate. The protein operates within metabolic intermediate biosynthesis; chorismate biosynthesis; chorismate from D-erythrose 4-phosphate and phosphoenolpyruvate: step 7/7. Catalyzes the anti-1,4-elimination of the C-3 phosphate and the C-6 proR hydrogen from 5-enolpyruvylshikimate-3-phosphate (EPSP) to yield chorismate, which is the branch point compound that serves as the starting substrate for the three terminal pathways of aromatic amino acid biosynthesis. This reaction introduces a second double bond into the aromatic ring system. The sequence is that of Chorismate synthase from Prochlorococcus marinus (strain MIT 9301).